The chain runs to 387 residues: Xylose isomerase (387 aa).

Residues H53 and D56 contribute to the active site. E180, E216, H219, D244, D254, D256, and D286 together coordinate Mg(2+).

This sequence belongs to the xylose isomerase family. As to quaternary structure, homotetramer. Mg(2+) is required as a cofactor.

It localises to the cytoplasm. The enzyme catalyses alpha-D-xylose = alpha-D-xylulofuranose. This is Xylose isomerase (xylA) from Thermus thermophilus (strain ATCC 27634 / DSM 579 / HB8).